Reading from the N-terminus, the 1100-residue chain is Lysylphosphatidylglycerol biosynthesis bifunctional protein LysX (1100 aa).

The tract at residues 1–601 is phosphatidylglycerol lysyltransferase; it reads MTPTSLARAR…LLHSDGTAPD (601 aa). 7 helical membrane-spanning segments follow: residues 18–38, 60–80, 84–104, 112–132, 154–174, 206–226, and 314–332; these read VPAA…LASV, FPDT…ALAA, IAWW…IAGL, FAEV…AFLL, LVAS…LFPG, VFVN…TAIV, and AYGW…AQAF. Residues 602-1100 form a lysine--tRNA ligase region; sequence GMGLQADLAD…TLPFPLAKPR (499 aa). Positions 661 to 739 form a DNA-binding region, OB; that stretch reads VAVAGRVLRS…SLLVSGWRLI (79 aa). Residues Asp1012 and Glu1019 each coordinate Mg(2+).

The protein in the N-terminal section; belongs to the LPG synthetase family. In the C-terminal section; belongs to the class-II aminoacyl-tRNA synthetase family. Requires Mg(2+) as cofactor.

Its subcellular location is the cell membrane. It carries out the reaction tRNA(Lys) + L-lysine + ATP = L-lysyl-tRNA(Lys) + AMP + diphosphate. It catalyses the reaction L-lysyl-tRNA(Lys) + a 1,2-diacyl-sn-glycero-3-phospho-(1'-sn-glycerol) = a 1,2-diacyl-sn-glycero-3-phospho-1'-(3'-O-L-lysyl)-sn-glycerol + tRNA(Lys). Functionally, catalyzes the production of L-lysyl-tRNA(Lys)transfer and the transfer of a lysyl group from L-lysyl-tRNA(Lys) to membrane-bound phosphatidylglycerol (PG), which produces lysylphosphatidylglycerol (LPG), one of the components of the bacterial membrane with a positive net charge. LPG synthesis contributes to the resistance to cationic antimicrobial peptides (CAMPs) and likely protects M.tuberculosis against the CAMPs produced by competiting microorganisms (bacteriocins). In fact, the modification of anionic phosphatidylglycerol with positively charged L-lysine results in repulsion of the peptides. This is Lysylphosphatidylglycerol biosynthesis bifunctional protein LysX (lysX) from Mycolicibacterium vanbaalenii (strain DSM 7251 / JCM 13017 / BCRC 16820 / KCTC 9966 / NRRL B-24157 / PYR-1) (Mycobacterium vanbaalenii).